The primary structure comprises 287 residues: Putative esterase/lipase HI_0193 (287 aa).

The 227-residue stretch at 47–273 folds into the AB hydrolase-1 domain; the sequence is PVLIFIHGLF…SGHWVHAEKP (227 aa). Catalysis depends on residues S119 and H266.

It belongs to the DmpD/TodF/XylF esterase family.

This chain is Putative esterase/lipase HI_0193, found in Haemophilus influenzae (strain ATCC 51907 / DSM 11121 / KW20 / Rd).